The chain runs to 266 residues: Tryptophan synthase alpha chain (266 aa).

Catalysis depends on proton acceptor residues Glu-45 and Asp-56.

It belongs to the TrpA family. Tetramer of two alpha and two beta chains.

The enzyme catalyses (1S,2R)-1-C-(indol-3-yl)glycerol 3-phosphate + L-serine = D-glyceraldehyde 3-phosphate + L-tryptophan + H2O. It participates in amino-acid biosynthesis; L-tryptophan biosynthesis; L-tryptophan from chorismate: step 5/5. Its function is as follows. The alpha subunit is responsible for the aldol cleavage of indoleglycerol phosphate to indole and glyceraldehyde 3-phosphate. The polypeptide is Tryptophan synthase alpha chain (Novosphingobium aromaticivorans (strain ATCC 700278 / DSM 12444 / CCUG 56034 / CIP 105152 / NBRC 16084 / F199)).